A 454-amino-acid chain; its full sequence is uncharacterized protein (454 aa).

This sequence belongs to the outer membrane factor (OMF) (TC 1.B.17) family.

This is an uncharacterized protein from Haemophilus influenzae (strain ATCC 51907 / DSM 11121 / KW20 / Rd).